The primary structure comprises 97 residues: UPF0235 protein APP7_1431 (97 aa).

The protein belongs to the UPF0235 family.

In Actinobacillus pleuropneumoniae serotype 7 (strain AP76), this protein is UPF0235 protein APP7_1431.